A 375-amino-acid polypeptide reads, in one-letter code: Alcohol dehydrogenase E chain (375 aa).

Serine 2 is modified (N-acetylserine). Cysteine 47, serine 49, histidine 68, cysteine 98, cysteine 101, cysteine 104, cysteine 112, and cysteine 175 together coordinate Zn(2+). Residues serine 49 and histidine 68 each contribute to the an alcohol site. Position 49 (serine 49) interacts with NAD(+). NAD(+)-binding positions include 200–205 (GLGGVG), aspartate 224, lysine 229, valine 293, 293–295 (VGV), phenylalanine 320, and arginine 370.

The protein belongs to the zinc-containing alcohol dehydrogenase family. Class-I subfamily. Dimer of identical or non-identical chains of two types (E and S) coded by 2 separate genes at different loci. Zn(2+) serves as cofactor.

The protein localises to the cytoplasm. The catalysed reaction is a primary alcohol + NAD(+) = an aldehyde + NADH + H(+). It catalyses the reaction a secondary alcohol + NAD(+) = a ketone + NADH + H(+). This chain is Alcohol dehydrogenase E chain, found in Equus caballus (Horse).